Here is a 469-residue protein sequence, read N- to C-terminus: Cell division protein FtsP (469 aa).

Positions 1 to 27 (MKLSRRQFLQRSTLAGVATVTPTSLWA) form a signal peptide, tat-type signal.

It belongs to the FtsP family. In terms of processing, predicted to be exported by the Tat system. The position of the signal peptide cleavage has not been experimentally proven.

The protein resides in the periplasm. Cell division protein that is required for growth during stress conditions. May be involved in protecting or stabilizing the divisomal assembly under conditions of stress. The chain is Cell division protein FtsP from Glaesserella parasuis serovar 5 (strain SH0165) (Haemophilus parasuis).